Reading from the N-terminus, the 371-residue chain is Peptide chain release factor 2 (371 aa).

Gln247 carries the post-translational modification N5-methylglutamine.

Belongs to the prokaryotic/mitochondrial release factor family. In terms of processing, methylated by PrmC. Methylation increases the termination efficiency of RF2.

It is found in the cytoplasm. Functionally, peptide chain release factor 2 directs the termination of translation in response to the peptide chain termination codons UGA and UAA. The sequence is that of Peptide chain release factor 2 from Caulobacter vibrioides (strain ATCC 19089 / CIP 103742 / CB 15) (Caulobacter crescentus).